Here is a 666-residue protein sequence, read N- to C-terminus: uncharacterized protein (666 aa).

Belongs to the MG032/MG096/MG288 family.

This is an uncharacterized protein from Mycoplasma genitalium (strain ATCC 33530 / DSM 19775 / NCTC 10195 / G37) (Mycoplasmoides genitalium).